Reading from the N-terminus, the 80-residue chain is Waprin-Phi3 (80 aa).

Positions 1–22 (MKPWILLLLAGLLILSTQLTTA) are cleaved as a signal peptide. The 48-residue stretch at 31-78 (PKVKPGECPKVKIPPDYPCNQYCVWDFDCEGNKKCCPVGCAKECFPPG) folds into the WAP domain. 4 cysteine pairs are disulfide-bonded: Cys38-Cys66, Cys49-Cys70, Cys53-Cys65, and Cys59-Cys74.

This sequence belongs to the venom waprin family. In terms of tissue distribution, expressed by the venom gland.

It localises to the secreted. Its function is as follows. Damages membranes of susceptible bacteria. Has no hemolytic activity. Not toxic to mice. Does not inhibit the proteinases elastase and cathepsin G. The polypeptide is Waprin-Phi3 (Philodryas olfersii (Green snake)).